Reading from the N-terminus, the 200-residue chain is Putative manganese exporter (200 aa).

6 helical membrane passes run 13-33 (TEHV…AEIG), 53-73 (IIAA…WLGV), 81-101 (PDIL…WILI), 110-130 (SIST…AEIG), 150-170 (WVIV…VLIG), and 180-200 (GLIR…TAFF).

Belongs to the GDT1 family.

Its subcellular location is the cell inner membrane. Functionally, involved in manganese homeostasis. May function as a manganese exporter. The polypeptide is Putative manganese exporter (Vibrio cholerae serotype O1 (strain ATCC 39541 / Classical Ogawa 395 / O395)).